The primary structure comprises 639 residues: ATP-dependent RNA helicase DDX51 (639 aa).

The interval 1–131 is disordered; that stretch reads MALFHIARYA…QEDVQRPPAP (131 aa). The residue at position 2 (Ala-2) is an N-acetylalanine. Positions 24-48 are enriched in basic and acidic residues; the sequence is AGSRARVLLERLQNRARERQQREPE. Over residues 50 to 63 the composition is skewed to low complexity; that stretch reads ETTGTAGEGEAAAA. The segment covering 64-76 has biased composition (basic residues); sequence GKRRRRPRRRRRV. At Ser-79 the chain carries Phosphoserine. Positions 94–105 are enriched in basic and acidic residues; that stretch reads ADKDVDAGRGEE. The short motif at 193-201 is the Q motif element; sequence YFPVQAAVI. The region spanning 215–424 is the Helicase ATP-binding domain; sequence GRGGYQPSDL…RLGLYQPRLF (210 aa). 228-235 is an ATP binding site; sequence APTGSGKT. Positions 343–346 match the DEAD box motif; sequence DEAD. At Ser-432 the chain carries Phosphoserine. The 149-residue stretch at 467 to 615 folds into the Helicase C-terminal domain; it reads IVLHLVLRMS…EIPRKLLQPL (149 aa).

The protein belongs to the DEAD box helicase family. DDX51/DBP6 subfamily.

Its subcellular location is the nucleus. It is found in the nucleolus. It catalyses the reaction ATP + H2O = ADP + phosphate + H(+). Its function is as follows. ATP-binding RNA helicase involved in the biogenesis of 60S ribosomal subunits. This Mus musculus (Mouse) protein is ATP-dependent RNA helicase DDX51 (Ddx51).